The primary structure comprises 964 residues: Glycine dehydrogenase (decarboxylating) (964 aa).

A compositionally biased stretch (polar residues) spans 1–10; sequence MNSTLQNRNR. Residues 1 to 25 are disordered; the sequence is MNSTLQNRNRTNLERVSTDPLDTFP. At lysine 713 the chain carries N6-(pyridoxal phosphate)lysine.

Belongs to the GcvP family. In terms of assembly, the glycine cleavage system is composed of four proteins: P, T, L and H. Pyridoxal 5'-phosphate is required as a cofactor.

The enzyme catalyses N(6)-[(R)-lipoyl]-L-lysyl-[glycine-cleavage complex H protein] + glycine + H(+) = N(6)-[(R)-S(8)-aminomethyldihydrolipoyl]-L-lysyl-[glycine-cleavage complex H protein] + CO2. Functionally, the glycine cleavage system catalyzes the degradation of glycine. The P protein binds the alpha-amino group of glycine through its pyridoxal phosphate cofactor; CO(2) is released and the remaining methylamine moiety is then transferred to the lipoamide cofactor of the H protein. The polypeptide is Glycine dehydrogenase (decarboxylating) (Leptospira borgpetersenii serovar Hardjo-bovis (strain JB197)).